A 704-amino-acid polypeptide reads, in one-letter code: Polyribonucleotide nucleotidyltransferase (704 aa).

2 residues coordinate Mg(2+): aspartate 491 and aspartate 497. The 60-residue stretch at 558 to 617 folds into the KH domain; it reads PNYAVIEINSDKIRDVIGKGGATIRQLTEDTGAVIDIDDNGTIRIFGENKAATKEAIRQI. The 69-residue stretch at 627–695 folds into the S1 motif domain; sequence GKVYKGTVAR…NRGRIKLTMK (69 aa).

The protein belongs to the polyribonucleotide nucleotidyltransferase family. As to quaternary structure, component of the RNA degradosome, which is a multiprotein complex involved in RNA processing and mRNA degradation. Requires Mg(2+) as cofactor.

It is found in the cytoplasm. It carries out the reaction RNA(n+1) + phosphate = RNA(n) + a ribonucleoside 5'-diphosphate. Its function is as follows. Involved in mRNA degradation. Catalyzes the phosphorolysis of single-stranded polyribonucleotides processively in the 3'- to 5'-direction. The protein is Polyribonucleotide nucleotidyltransferase of Psychrobacter sp. (strain PRwf-1).